The following is a 545-amino-acid chain: Protein disulfide isomerase-like 1-3 (545 aa).

Positions 1-16 (MWPRAPATPPPPPWPS) are enriched in pro residues. The tract at residues 1–24 (MWPRAPATPPPPPWPSKPSAASRS) is disordered. Residues 55–189 (ASSTAFAAAF…IVAYLKRQAG (135 aa)) form the Thioredoxin 1 domain. A glycan (N-linked (GlcNAc...) asparagine) is linked at Asn87. Active-site nucleophile residues include Cys107 and Cys110. Cys107 and Cys110 form a disulfide bridge. Asn349 carries an N-linked (GlcNAc...) asparagine glycan. One can recognise a Thioredoxin 2 domain in the interval 403–545 (FTEGTLAPHV…TTTESVKDEL (143 aa)). Active-site nucleophile residues include Cys453 and Cys456. A disulfide bridge connects residues Cys453 and Cys456. The Prevents secretion from ER signature appears at 542–545 (KDEL).

Belongs to the protein disulfide isomerase family.

It is found in the endoplasmic reticulum lumen. The enzyme catalyses Catalyzes the rearrangement of -S-S- bonds in proteins.. Acts as a protein-folding catalyst that interacts with nascent polypeptides to catalyze the formation, isomerization, and reduction or oxidation of disulfide bonds. May play a role in storage protein biogenesis. The polypeptide is Protein disulfide isomerase-like 1-3 (PDIL1-3) (Oryza sativa subsp. japonica (Rice)).